The primary structure comprises 695 residues: UvrABC system protein B (695 aa).

The Helicase ATP-binding domain maps to 25–176 (KSISEGHRFQ…NQRDVLRDLA (152 aa)). Residue 38–45 (GATGTGKT) coordinates ATP. Positions 91-114 (YYDYYQPEAYVPSTDTYIAKSSSI) match the Beta-hairpin motif. The Helicase C-terminal domain occupies 454–617 (LLGEIYLRLE…ITPKPIVKKN (164 aa)). The UVR domain maps to 652–687 (PELIGQLELKMKEAAKNLEFEEAAQLRDRIKKLRQR).

This sequence belongs to the UvrB family. Forms a heterotetramer with UvrA during the search for lesions. Interacts with UvrC in an incision complex.

Its subcellular location is the cytoplasm. Its function is as follows. The UvrABC repair system catalyzes the recognition and processing of DNA lesions. A damage recognition complex composed of 2 UvrA and 2 UvrB subunits scans DNA for abnormalities. Upon binding of the UvrA(2)B(2) complex to a putative damaged site, the DNA wraps around one UvrB monomer. DNA wrap is dependent on ATP binding by UvrB and probably causes local melting of the DNA helix, facilitating insertion of UvrB beta-hairpin between the DNA strands. Then UvrB probes one DNA strand for the presence of a lesion. If a lesion is found the UvrA subunits dissociate and the UvrB-DNA preincision complex is formed. This complex is subsequently bound by UvrC and the second UvrB is released. If no lesion is found, the DNA wraps around the other UvrB subunit that will check the other stand for damage. This Synechococcus sp. (strain JA-2-3B'a(2-13)) (Cyanobacteria bacterium Yellowstone B-Prime) protein is UvrABC system protein B.